Here is a 409-residue protein sequence, read N- to C-terminus: Cuticle-degrading serine protease (409 aa).

Positions 1-21 are cleaved as a signal peptide; sequence MLTNGLISLLAIAGLATNAFA. Positions 22 to 123 are excised as a propeptide; sequence GPIRKVSNAG…VEQDTVVTTY (102 aa). The Inhibitor I9 domain maps to 39–122; sequence KYIVVLKKGL…YVEQDTVVTT (84 aa). One can recognise a Peptidase S8 domain in the interval 130–409; the sequence is TWGLDRISHE…PNKIAYNGYA (280 aa). The active-site Charge relay system is D164. N178 is a glycosylation site (N-linked (GlcNAc...) asparagine). H200 serves as the catalytic Charge relay system. Residue N252 is glycosylated (N-linked (GlcNAc...) asparagine). Catalysis depends on S353, which acts as the Charge relay system.

Belongs to the peptidase S8 family.

It localises to the secreted. Inhibited by PMSF, SSI, the peptide Phe-Val and by Phe, but not by EDTA. Functionally, hydrolyzes gelatin, casein, the chromogenic substrate azocoll and the cuticle of the nematode P.redivivus. Immobilizes P.redivivus. The polypeptide is Cuticle-degrading serine protease (Arthrobotrys oligospora (strain ATCC 24927 / CBS 115.81 / DSM 1491) (Nematode-trapping fungus)).